Here is a 1213-residue protein sequence, read N- to C-terminus: DNA-directed RNA polymerase subunit beta' (1213 aa).

C60, C62, C75, and C78 together coordinate Zn(2+). Mg(2+)-binding residues include D450, D452, and D454. Positions 819, 893, 900, and 903 each coordinate Zn(2+).

This sequence belongs to the RNA polymerase beta' chain family. In terms of assembly, the RNAP catalytic core consists of 2 alpha, 1 beta, 1 beta' and 1 omega subunit. When a sigma factor is associated with the core the holoenzyme is formed, which can initiate transcription. Mg(2+) serves as cofactor. The cofactor is Zn(2+).

The enzyme catalyses RNA(n) + a ribonucleoside 5'-triphosphate = RNA(n+1) + diphosphate. DNA-dependent RNA polymerase catalyzes the transcription of DNA into RNA using the four ribonucleoside triphosphates as substrates. This chain is DNA-directed RNA polymerase subunit beta', found in Streptococcus pyogenes serotype M6 (strain ATCC BAA-946 / MGAS10394).